The following is a 289-amino-acid chain: Cytochrome bc1 complex cytochrome c subunit (289 aa).

The segment covering Met1 to Arg11 has biased composition (basic residues). The tract at residues Met1–Arg28 is disordered. Residues Gly37 to Thr55 form a helical membrane-spanning segment. Cytochrome c domains follow at residues Ala69 to Gly149 and Thr170 to Ile248. Residues Cys82, Cys85, His86, Cys183, Cys186, and His187 each contribute to the heme c site. The helical transmembrane segment at Gly267–Ala287 threads the bilayer.

In terms of assembly, the cytochrome bc1 complex is composed of a cytochrome b (QcrB), the Rieske iron-sulfur protein (QcrA) and a diheme cytochrome c (QcrC) subunit. Post-translationally, binds 2 heme c groups covalently per subunit.

Its subcellular location is the cell membrane. It carries out the reaction a quinol + 2 Fe(III)-[cytochrome c](out) = a quinone + 2 Fe(II)-[cytochrome c](out) + 2 H(+)(out). In terms of biological role, cytochrome b subunit of the cytochrome bc1 complex, an essential component of the respiratory electron transport chain required for ATP synthesis. The bc1 complex catalyzes the oxidation of ubiquinol and the reduction of cytochrome c in the respiratory chain. The bc1 complex operates through a Q-cycle mechanism that couples electron transfer to generation of the proton gradient that drives ATP synthesis. In Mycobacterium leprae (strain TN), this protein is Cytochrome bc1 complex cytochrome c subunit (qcrC).